The following is a 65-amino-acid chain: Large ribosomal subunit protein bL35 (65 aa).

It belongs to the bacterial ribosomal protein bL35 family.

The protein is Large ribosomal subunit protein bL35 of Prochlorococcus marinus subsp. pastoris (strain CCMP1986 / NIES-2087 / MED4).